Consider the following 290-residue polypeptide: Chitinase 10 (290 aa).

The first 28 residues, 1-28 (MAKPTPAPRATPFLLAAVLSIVVVAASG), serve as a signal peptide directing secretion. Intrachain disulfides connect Cys70-Cys132 and Cys144-Cys153. The active-site Proton donor is the Glu114. Residues Asn193 and Asn234 are each glycosylated (N-linked (GlcNAc...) asparagine). A disulfide bridge connects residues Cys252 and Cys284.

The protein belongs to the glycosyl hydrolase 19 family. Chitinase class I subfamily. Expressed at low levels in roots, leaves and meristems.

The enzyme catalyses Random endo-hydrolysis of N-acetyl-beta-D-glucosaminide (1-&gt;4)-beta-linkages in chitin and chitodextrins.. This chain is Chitinase 10 (Cht10), found in Oryza sativa subsp. japonica (Rice).